The following is a 454-amino-acid chain: MTDFDLAGIGIGPFNLGLAALLSSHENLSNVFLERKPAFRWHEGLILPGTTLQVPFMADLVTMADPTHRLSFLNYLAVHDRLYKFYFYENFMIPRQEYDHYCRWASQQLSACRFGEEVVDVAHESASDSFIVESRSASGGKQQYRSRNIAIGVGTAPFLPKWAQIKTLAPLMHSSEFGRRRLELSKRRRVTVIGSGQSAAECVLALLNDLTPEMVAAGASIQWITRSAGFFPMEYSKLGLEYFTPDYMRHFHRIAPVRRREIVADQGLLYKGISFSTIGEIFDLMYERSVGGRDPGLALFSNCAVETLESAGGSGSFRIGINHNHLDEKATVETDAIVAATGYRHAWPEWLGSLKGSVLDTCEWGDLVVGGDFRARRSDGGKGHVFVQNAETFHHGVGAPDLGLGAFRNAVIVNQLLGREHYRVNASASFQKFGLPSSQTAPSSISGDFYAHAS.

7–13 contacts FAD; sequence AGIGIGP.

This sequence belongs to the lysine N(6)-hydroxylase/L-ornithine N(5)-oxygenase family. Requires FAD as cofactor.

The protein operates within siderophore biosynthesis; rhizobactin biosynthesis. This chain is Rhizobactin siderophore biosynthesis protein RhbE (rhbE), found in Rhizobium meliloti (strain 1021) (Ensifer meliloti).